Here is a 238-residue protein sequence, read N- to C-terminus: Ribonuclease PH (238 aa).

Residues arginine 86 and glycine 124–arginine 126 contribute to the phosphate site.

Belongs to the RNase PH family. In terms of assembly, homohexameric ring arranged as a trimer of dimers.

It catalyses the reaction tRNA(n+1) + phosphate = tRNA(n) + a ribonucleoside 5'-diphosphate. In terms of biological role, phosphorolytic 3'-5' exoribonuclease that plays an important role in tRNA 3'-end maturation. Removes nucleotide residues following the 3'-CCA terminus of tRNAs; can also add nucleotides to the ends of RNA molecules by using nucleoside diphosphates as substrates, but this may not be physiologically important. Probably plays a role in initiation of 16S rRNA degradation (leading to ribosome degradation) during starvation. The protein is Ribonuclease PH of Brucella abortus (strain S19).